Consider the following 262-residue polypeptide: Nurim (262 aa).

Residues 1–4 (MAPA) are Nuclear-facing. A helical membrane pass occupies residues 5–28 (LLLVPAALASFVLAFGTGVEFVRF). The Perinuclear space segment spans residues 29 to 58 (TSLRPLLGGIPESGGPDARHGWLAALQDRS). The helical transmembrane segment at 59–80 (ILASLAWDLCLLLLFVVQHSLM) threads the bilayer. The Nuclear portion of the chain corresponds to 81-97 (ATEAVKAWTSRYFGVLQ). A helical transmembrane segment spans residues 98 to 114 (RSLYVACTALALQLVMR). Topologically, residues 115 to 133 (YWEATPRGPVLWEARAEPW) are perinuclear space. A helical membrane pass occupies residues 134 to 164 (ATWVPLLCFVLHVVSWLLIFSILLVFDYAEL). At 165–191 (MGLKQVYYHVLGLGEPLSLKSPRALRL) the chain is on the nuclear side. Residues 192-210 (FSHLRHPVCVELLTVLWVV) form a helical membrane-spanning segment. Over 211–216 (PTLGTD) the chain is Perinuclear space. A helical membrane pass occupies residues 217-234 (RLLLALLFTLYLGLAHGL). Residues 235-262 (DQQDLRYLRSQLQRKLQLLSRPQDGEAE) lie on the Nuclear side of the membrane.

The protein belongs to the nurim family.

Its subcellular location is the nucleus inner membrane. This chain is Nurim (Nrm), found in Rattus norvegicus (Rat).